A 316-amino-acid chain; its full sequence is L-lactate dehydrogenase 3 (316 aa).

Positions 16, 37, 42, and 68 each coordinate NAD(+). Arginine 91 is a substrate binding site. NAD(+) contacts are provided by residues serine 104, 121-123 (ASN), and threonine 146. A substrate-binding site is contributed by 123–126 (NPVD). Residue 151–154 (DSSR) coordinates substrate. Beta-D-fructose 1,6-bisphosphate-binding residues include arginine 156 and histidine 171. Histidine 178 (proton acceptor) is an active-site residue. Threonine 233 provides a ligand contact to substrate.

This sequence belongs to the LDH/MDH superfamily. LDH family. As to quaternary structure, homotetramer.

It localises to the cytoplasm. The enzyme catalyses (S)-lactate + NAD(+) = pyruvate + NADH + H(+). Its pathway is fermentation; pyruvate fermentation to lactate; (S)-lactate from pyruvate: step 1/1. With respect to regulation, allosterically activated by fructose 1,6-bisphosphate (FBP). In terms of biological role, catalyzes the conversion of lactate to pyruvate. The polypeptide is L-lactate dehydrogenase 3 (Bacillus cereus (strain ATCC 14579 / DSM 31 / CCUG 7414 / JCM 2152 / NBRC 15305 / NCIMB 9373 / NCTC 2599 / NRRL B-3711)).